We begin with the raw amino-acid sequence, 159 residues long: 2-C-methyl-D-erythritol 2,4-cyclodiphosphate synthase (159 aa).

A divalent metal cation contacts are provided by Asp-8 and His-10. 4-CDP-2-C-methyl-D-erythritol 2-phosphate is bound by residues 8-10 and 34-35; these read DVH and HS. His-42 serves as a coordination point for a divalent metal cation. Residues 56 to 58, 61 to 65, 100 to 106, 132 to 135, Phe-139, and Arg-142 each bind 4-CDP-2-C-methyl-D-erythritol 2-phosphate; these read DIG, FPDTD, AQAPKML, and TTTE.

It belongs to the IspF family. Homotrimer. A divalent metal cation is required as a cofactor.

The enzyme catalyses 4-CDP-2-C-methyl-D-erythritol 2-phosphate = 2-C-methyl-D-erythritol 2,4-cyclic diphosphate + CMP. It functions in the pathway isoprenoid biosynthesis; isopentenyl diphosphate biosynthesis via DXP pathway; isopentenyl diphosphate from 1-deoxy-D-xylulose 5-phosphate: step 4/6. Functionally, involved in the biosynthesis of isopentenyl diphosphate (IPP) and dimethylallyl diphosphate (DMAPP), two major building blocks of isoprenoid compounds. Catalyzes the conversion of 4-diphosphocytidyl-2-C-methyl-D-erythritol 2-phosphate (CDP-ME2P) to 2-C-methyl-D-erythritol 2,4-cyclodiphosphate (ME-CPP) with a corresponding release of cytidine 5-monophosphate (CMP). The polypeptide is 2-C-methyl-D-erythritol 2,4-cyclodiphosphate synthase (Salmonella dublin (strain CT_02021853)).